A 101-amino-acid polypeptide reads, in one-letter code: Putative pterin-4-alpha-carbinolamine dehydratase (101 aa).

The protein belongs to the pterin-4-alpha-carbinolamine dehydratase family.

It catalyses the reaction (4aS,6R)-4a-hydroxy-L-erythro-5,6,7,8-tetrahydrobiopterin = (6R)-L-erythro-6,7-dihydrobiopterin + H2O. This is Putative pterin-4-alpha-carbinolamine dehydratase from Nitrobacter hamburgensis (strain DSM 10229 / NCIMB 13809 / X14).